A 662-amino-acid polypeptide reads, in one-letter code: Histidine decarboxylase (662 aa).

2 residues coordinate substrate: Tyr81 and His194. An N6-(pyridoxal phosphate)lysine modification is found at Lys305.

It belongs to the group II decarboxylase family. In terms of assembly, homodimer. Requires pyridoxal 5'-phosphate as cofactor.

It carries out the reaction L-histidine + H(+) = histamine + CO2. Its pathway is amine and polyamine biosynthesis; histamine biosynthesis; histamine from L-histidine: step 1/1. Catalyzes the biosynthesis of histamine from histidine. The protein is Histidine decarboxylase (HDC) of Homo sapiens (Human).